Reading from the N-terminus, the 33-residue chain is DELTA-pseudomyrmecitoxin-Pp1a subunit B (33 aa).

Heterodimer composed of subunit A and subunit B (DELTA-PSDTX-Pp1a); disulfide-linked. As to expression, expressed by the venom gland.

The protein resides in the secreted. Its function is as follows. This heterodimer has insecticidal and cytotoxic properties. Induces immediate paralysis when injected into blowflies (Lucilia cuprina), and then death within 24 hours. Also inhibits the growth of Aedes albopictus mosquito C6/36 cells. This is DELTA-pseudomyrmecitoxin-Pp1a subunit B from Pseudomyrmex penetrator (Ant).